Reading from the N-terminus, the 683-residue chain is C-mannosyltransferase dpy-19 (683 aa).

A run of 11 helical transmembrane segments spans residues 21 to 41, 167 to 187, 188 to 208, 220 to 240, 267 to 287, 298 to 318, 319 to 339, 344 to 364, 413 to 433, 467 to 487, and 502 to 522; these read SLYSQTWLASVVIIGLLVGYI, ITGVFIVAGTVASSIFYLGVL, VSDSIFGGFLSVLCFAFNHGE, ESFAFPFIIGHIAILTFVIKY, FAFFTQICSIFLAFSLDLIPF, IISFLIGFLLLFGNEMMITAL, YFPSILALGMIIYISPLLSNL, AYVLFLAIIFASITLGLKIGL, CGTLLIPLALISLVTFVFNFV, FLIMRLKLFMTPHLCIVAALF, and IRVSALVGVIAILFYRGIPNI.

This sequence belongs to the dpy-19 family. As to expression, expressed faintly in neuroblasts QL and QR, more strongly in the neighboring epidermal cells (dorsal hyp7 cells, ventral P cells and lateral V cells), and in dorsal and ventral body muscle cells.

Its subcellular location is the endoplasmic reticulum membrane. In terms of biological role, C-mannosyltransferase that mediates C-mannosylation of tryptophan residues on target proteins such as unc-5 and mig-21. Mediates the attachment of alpha-mannose in C-C linkage to the C2 of the indole ring of tryptophan. C-mannosylation takes place in the endoplasmic reticulum and frequently found in thrombospondin (TSP) type-1 repeats and in the WSXWS motif of type I cytokine receptors. Required to orient neuroblasts QL and QR correctly on the anterior/posterior (A/P) axis: QL and QR are born in the same A/P position, but polarize and migrate left/right asymmetrically, QL migrates toward the posterior and QR migrates toward the anterior. Required with unc-40 to express mab-5 correctly in the Q cell descendants. The sequence is that of C-mannosyltransferase dpy-19 (dpy-19) from Caenorhabditis elegans.